Reading from the N-terminus, the 423-residue chain is Gamma-glutamyl phosphate reductase (423 aa).

This sequence belongs to the gamma-glutamyl phosphate reductase family.

The protein localises to the cytoplasm. The enzyme catalyses L-glutamate 5-semialdehyde + phosphate + NADP(+) = L-glutamyl 5-phosphate + NADPH + H(+). It functions in the pathway amino-acid biosynthesis; L-proline biosynthesis; L-glutamate 5-semialdehyde from L-glutamate: step 2/2. Catalyzes the NADPH-dependent reduction of L-glutamate 5-phosphate into L-glutamate 5-semialdehyde and phosphate. The product spontaneously undergoes cyclization to form 1-pyrroline-5-carboxylate. The sequence is that of Gamma-glutamyl phosphate reductase from Burkholderia thailandensis (strain ATCC 700388 / DSM 13276 / CCUG 48851 / CIP 106301 / E264).